Reading from the N-terminus, the 1227-residue chain is Pentatricopeptide repeat-containing protein At5g15280, mitochondrial (1227 aa).

The N-terminal 31 residues, 1-31 (MLNLLSISSSSRLRFLNKVSSLTYHYSFAFF), are a transit peptide targeting the mitochondrion. 28 PPR repeats span residues 146–180 (LPQACEIMASMLIREGMVKEVELLLMEMERHGDTM), 182–216 (NEGIFCDLIGKYVDDFDSRKAVMLFDWMRRKGLVP), 217–251 (LTSCYQILIDQLVRVHRTESAYRICLDWVETRAEL), 255–289 (NIDSIGKVIELLCLDQKVQEARVLARKLVALGCIL), 290–320 (NSSIYSKITIGYNEKQDFEDLLSFIGEVKYE), 322–356 (DVFVGNRILHSLCRRFGSERAYVYMEELEHLGFKQ), 357–391 (DEVTFGILIGWCCYEGDIKRAVLYLSEIMSKGYKP), 392–426 (DVYSYNAILSGLFRKGLWQHTHCILDEMKENGMML), 427–461 (SLSTFKIMVTGYCKARQFEEAKRIVNKMFGYGLIE), 527–561 (VLPEFNSLIVRASEDGDLQTALRLLDEMARWGQKL), 562–597 (SRRSFAVLMRSLCASRAHLRVSISLLEKWPKLAYQL), 598–632 (DGETLNFLVQEYCKKGFSRHSKLIFHKMVQMHHPI), 633–667 (DNVTYTSLIRCFCKKETLNDLLNVWGAAQNDNWLP), 668–698 (DLNDCGDLWNCLVRKGLVEEVVQLFERVFIS), 703–737 (QSEACRIFVEKLTVLGFSCIAHSVVKRLEGEGCIV), 738–772 (EQEVYNHLIKGLCTEKKDSAAFAILDEMLDKKHIP), 773–800 (SLGSCLMLIPRLCRANKAGTAFNLAEQI), 802–836 (SSYVHYALIKGLSLAGKMLDAENQLRIMLSNGLSS), 837–871 (YNKIYNVMFQGYCKGNNWMKVEEVLGLMVRKNIIC), 872–906 (SVKSYREYVRKMCLEPQSLSAISLKEFLLLGESNP), 908–942 (GVIIYNMLIFYMFRAKNHLEVNKVLLEMQGRGVLP), 943–977 (DETTFNFLVHGYSSSADYSSSLRYLSAMISKGMKP), 978–1012 (NNRSLRAVTSSLCDNGDVKKALDLWQVMESKGWNL), 1014–1044 (SSVVQTKIVETLISKGEIPKAEDFLTRVTRN), 1047–1081 (MAPNYDNIIKKLSDRGNLDIAVHLLNTMLKNQSIP), 1082–1116 (GSSSYDSVINGLLRYNQLDKAMDFHTEMVELGLSP), 1117–1151 (SISTWSGLVHKFCEACQVLESERLIKSMVGLGESP), and 1152–1186 (SQEMFKTVIDRFRVEKNTVKASEMMEMMQKCGYEV).

Belongs to the PPR family. P subfamily.

The protein localises to the mitochondrion. The chain is Pentatricopeptide repeat-containing protein At5g15280, mitochondrial from Arabidopsis thaliana (Mouse-ear cress).